Reading from the N-terminus, the 390-residue chain is Pyruvate dehydrogenase E1 component subunit alpha, somatic form, mitochondrial (390 aa).

The transit peptide at 1-29 (MRKMLAAVSRVLSGASQKPASRVLVASRN) directs the protein to the mitochondrion. Lys-63 bears the N6-acetyllysine; alternate mark. Lys-63 is modified (N6-succinyllysine; alternate). The pyruvate site is built by His-92, Tyr-118, Arg-119, Ala-157, Gly-165, Val-167, Asp-196, Gly-197, Ala-198, Asn-225, and Tyr-227. Tyr-118 and Arg-119 together coordinate thiamine diphosphate. Thiamine diphosphate is bound by residues Gly-165, Val-167, Asp-196, Gly-197, Ala-198, and Asn-225. Asp-196 contributes to the Mg(2+) binding site. Residues Asn-225 and Tyr-227 each contribute to the Mg(2+) site. Phosphoserine; by PDK1 is present on Ser-232. The residue at position 244 (Lys-244) is an N6-acetyllysine; alternate. Lys-244 carries the post-translational modification N6-succinyllysine; alternate. Lys-277 carries the post-translational modification N6-succinyllysine. His-292 is a binding site for thiamine diphosphate. Phosphoserine; by PDK1, PDK2, PDK3 and PDK4 is present on Ser-293. Position 295 is a phosphoserine (Ser-295). Residue Ser-300 is modified to Phosphoserine; by PDK1, PDK2, PDK3 and PDK4. Phosphotyrosine is present on Tyr-301. Lys-313 carries the N6-acetyllysine; alternate modification. Lys-313 is modified (N6-succinyllysine; alternate). An N6-acetyllysine mark is found at Lys-321 and Lys-336. An N6-succinyllysine modification is found at Lys-385.

Heterotetramer of two PDHA1 and two PDHB subunits. The heterotetramer interacts with DLAT, and is part of the multimeric pyruvate dehydrogenase complex that contains multiple copies of pyruvate dehydrogenase (E1), dihydrolipoamide acetyltransferase (DLAT, E2) and lipoamide dehydrogenase (DLD, E3). These subunits are bound to an inner core composed of about 48 DLAT and 12 PDHX molecules. Thiamine diphosphate is required as a cofactor. Requires Mg(2+) as cofactor. Phosphorylation at Ser-232, Ser-293 and Ser-300 by PDK family kinases inactivates the enzyme; for this phosphorylation at a single site is sufficient. Phosphorylation at Ser-293 interferes with access to active site, and thereby inactivates the enzyme. Dephosphorylation at all three sites, i.e. at Ser-232, Ser-293 and Ser-300, is required for reactivation. Post-translationally, acetylation alters the phosphorylation pattern. Deacetylated by SIRT3.

It is found in the mitochondrion matrix. It catalyses the reaction N(6)-[(R)-lipoyl]-L-lysyl-[protein] + pyruvate + H(+) = N(6)-[(R)-S(8)-acetyldihydrolipoyl]-L-lysyl-[protein] + CO2. Pyruvate dehydrogenase activity is inhibited by phosphorylation of PDHA1; it is reactivated by dephosphorylation. In terms of biological role, the pyruvate dehydrogenase complex catalyzes the overall conversion of pyruvate to acetyl-CoA and CO(2), and thereby links the glycolytic pathway to the tricarboxylic cycle. The chain is Pyruvate dehydrogenase E1 component subunit alpha, somatic form, mitochondrial (PDHA1) from Macaca fascicularis (Crab-eating macaque).